The following is a 134-amino-acid chain: Transcription antitermination protein NusB (134 aa).

The protein belongs to the NusB family.

Functionally, involved in transcription antitermination. Required for transcription of ribosomal RNA (rRNA) genes. Binds specifically to the boxA antiterminator sequence of the ribosomal RNA (rrn) operons. This Shewanella loihica (strain ATCC BAA-1088 / PV-4) protein is Transcription antitermination protein NusB.